Reading from the N-terminus, the 1115-residue chain is Receptor-type tyrosine-protein phosphatase H (1115 aa).

Residues 1–27 (MAGAGGGLGVWGNLVLLGLCSWTGARA) form the signal peptide. Over 28 to 754 (PAPNPGRNLT…VVCHTESAGV (727 aa)) the chain is Extracellular. Fibronectin type-III domains follow at residues 32 to 121 (PGRN…APNP), 122 to 209 (VRNL…TAHN), 210 to 299 (PVRN…APNP), 300 to 387 (VRNL…TAPN), 388 to 477 (PVRN…VPNA), 478 to 563 (VTSL…TAAT), 564 to 666 (APNE…TYPD), and 665 to 749 (PDTV…VCHT). Residues asparagine 35, asparagine 83, asparagine 172, asparagine 256, asparagine 285, asparagine 350, asparagine 434, asparagine 468, asparagine 556, and asparagine 642 are each glycosylated (N-linked (GlcNAc...) asparagine). The chain crosses the membrane as a helical span at residues 755–775 (IAGAFVGILLFLILVGLLIFF). Residues 776 to 1115 (LKRRNKKKQQ…AAIQAHKLEV (340 aa)) lie on the Cytoplasmic side of the membrane. A Tyrosine-protein phosphatase domain is found at 820-1079 (FADEYQQLSL…VFLHQCILRF (260 aa)). Cysteine 1020 serves as the catalytic Phosphocysteine intermediate. Phosphotyrosine is present on residues tyrosine 1094 and tyrosine 1102.

It belongs to the protein-tyrosine phosphatase family. Receptor class 3 subfamily. In terms of assembly, homodimer; disulfide-linked. Interacts with LCK. Interacts (phosphorylated form) with GRB2 (via SH2 domain). Interacts (phosphorylated form) with FYN (via SH2 domain). Interacts (via extracellular domain) with CEACAM20 (via extracellular domain); the interaction dephosphorylates CEACAM20. As to expression, expressed at high levels in the brain, spleen and liver and at lower levels in the heart and stomach. Expressed in pancreatic and colorectal cancer cells, but not in normal pancreas or colon. Expression in hepatocellular carcinoma is related to the differentiation status of the tumor and expression is inversely related to tumor aggressiveness.

Its subcellular location is the cell projection. The protein resides in the microvillus membrane. It localises to the apical cell membrane. It is found in the cytoplasm. It catalyses the reaction O-phospho-L-tyrosyl-[protein] + H2O = L-tyrosyl-[protein] + phosphate. Its activity is regulated as follows. Regulated by reversible dimerization. Dimerization reduces its catalytic activity. In terms of biological role, protein phosphatase that may contribute to contact inhibition of cell growth and motility by mediating the dephosphorylation of focal adhesion-associated substrates and thus negatively regulating integrin-promoted signaling processes. Induces apoptotic cell death by at least two distinct mechanisms: inhibition of cell survival signaling mediated by PI 3-kinase, Akt, and ILK and activation of a caspase-dependent proapoptotic pathway. Inhibits the basal activity of LCK and its activation in response to TCR stimulation and TCR-induced activation of MAP kinase and surface expression of CD69. Inhibits TCR-induced tyrosine phosphorylation of LAT and ZAP70. Inhibits both basal activity of DOK1 and its CD2-induced tyrosine phosphorylation. Induces dephosphorylation of BCAR1, focal adhesion kinase and SRC. Reduces migratory activity of activity of Jurkat cells. Reduces tyrosine phosphorylation of CEACAM20 and thereby contributes to suppress the intestinal immune response CEACAM20. The sequence is that of Receptor-type tyrosine-protein phosphatase H (PTPRH) from Homo sapiens (Human).